Reading from the N-terminus, the 415-residue chain is von Willebrand factor A domain-containing protein 1 (415 aa).

The first 18 residues, 1-18 (MLFWTAFSMALSLRLALA), serve as a signal peptide directing secretion. One can recognise a VWFA domain in the interval 34-209 (DLLFLLDSSA…IIARELRGSI (176 aa)). Phosphoserine occurs at positions 74, 80, and 93. Fibronectin type-III domains are found at residues 214 to 305 (QPQQ…LQEE) and 307 to 403 (GPER…TRAP). Asparagine 264 carries an N-linked (GlcNAc...) asparagine glycan. Cysteine 369 and cysteine 393 form a disulfide bridge. The disordered stretch occupies residues 391-415 (KACTASGARTRAPQSMRPEAGPREP).

Homodimer or homomultimer; disulfide-linked. Interacts with HSPG2. Post-translationally, N-glycosylated. As to expression, expressed at high levels in the chondrocytes. Detected in the vasculature of neural tissues, in basement membrane structures of the peripheral nervous system, in the apical ectodermal ridge of developing limb buds, and in skeletal and cardiac muscle (at protein level).

Its subcellular location is the secreted. The protein localises to the extracellular space. It is found in the extracellular matrix. It localises to the basement membrane. Functionally, promotes matrix assembly. Involved in the organization of skeletal muscles and in the formation of neuromuscular junctions. The chain is von Willebrand factor A domain-containing protein 1 (Vwa1) from Mus musculus (Mouse).